The sequence spans 258 residues: Phosphonates import ATP-binding protein PhnC 3 (258 aa).

The ABC transporter domain occupies 2–246; sequence IEFKNVSLVY…TFEEIYGRKI (245 aa). 35–42 contacts ATP; that stretch reads GLSGAGKS.

It belongs to the ABC transporter superfamily. Phosphonates importer (TC 3.A.1.9.1) family. As to quaternary structure, the complex is composed of two ATP-binding proteins (PhnC), two transmembrane proteins (PhnE) and a solute-binding protein (PhnD).

It is found in the cell membrane. It catalyses the reaction phosphonate(out) + ATP + H2O = phosphonate(in) + ADP + phosphate + H(+). In terms of biological role, part of the ABC transporter complex PhnCDE involved in phosphonates import. Responsible for energy coupling to the transport system. The sequence is that of Phosphonates import ATP-binding protein PhnC 3 from Halalkalibacterium halodurans (strain ATCC BAA-125 / DSM 18197 / FERM 7344 / JCM 9153 / C-125) (Bacillus halodurans).